Reading from the N-terminus, the 524-residue chain is DNA damage-binding protein CMR1 (524 aa).

The interval 35–79 (EKIIPKPAPPKPKRASAPRAKREPVKRETARPTRQSSRLAGLDAD) is disordered. Residues 54–65 (AKREPVKRETAR) are compositionally biased toward basic and acidic residues. 7 WD repeats span residues 184-225 (LVPQ…VKAE), 245-285 (THSR…STEA), 295-332 (LPISAIDMPTSDPNMIIFSTLQGTLGRHDLRTKSSTAE), 336-376 (LTDQ…GKGD), 385-425 (THDS…KWTA), 447-490 (GRWV…LAQL), and 493-524 (DGITAVPAVAHFHPTMDWVAGGNGSGKLCLWM).

It belongs to the WD repeat DDB2/WDR76 family.

In terms of biological role, DNA-binding protein that binds to both single- and double-stranded DNA. Binds preferentially to UV-damaged DNA. May be involved in DNA-metabolic processes. The protein is DNA damage-binding protein CMR1 of Chaetomium globosum (strain ATCC 6205 / CBS 148.51 / DSM 1962 / NBRC 6347 / NRRL 1970) (Soil fungus).